The chain runs to 401 residues: Argininosuccinate synthase (401 aa).

9–17 (AYSGGLDTS) is a binding site for ATP. Tyrosine 86 contributes to the L-citrulline binding site. An ATP-binding site is contributed by glycine 116. L-aspartate contacts are provided by threonine 118, asparagine 122, and aspartate 123. Asparagine 122 lines the L-citrulline pocket. L-citrulline-binding residues include arginine 126, serine 174, serine 183, glutamate 259, and tyrosine 271.

Belongs to the argininosuccinate synthase family. Type 1 subfamily. As to quaternary structure, homotetramer.

The protein resides in the cytoplasm. The enzyme catalyses L-citrulline + L-aspartate + ATP = 2-(N(omega)-L-arginino)succinate + AMP + diphosphate + H(+). It functions in the pathway amino-acid biosynthesis; L-arginine biosynthesis; L-arginine from L-ornithine and carbamoyl phosphate: step 2/3. This is Argininosuccinate synthase from Bacillus thuringiensis subsp. konkukian (strain 97-27).